Reading from the N-terminus, the 126-residue chain is UPF0235 protein C15orf40 homolog (126 aa).

The tract at residues 1–33 (MPKKAGATSKGKNQTKEPETPPPPTGPVATDSK) is disordered. Serine 89 is subject to Phosphoserine.

The protein belongs to the UPF0235 family.

In Rattus norvegicus (Rat), this protein is UPF0235 protein C15orf40 homolog.